Consider the following 121-residue polypeptide: Large ribosomal subunit protein uL14 (121 aa).

Belongs to the universal ribosomal protein uL14 family. As to quaternary structure, part of the 50S ribosomal subunit. Forms a cluster with proteins L3 and L19. In the 70S ribosome, L14 and L19 interact and together make contacts with the 16S rRNA in bridges B5 and B8.

Its function is as follows. Binds to 23S rRNA. Forms part of two intersubunit bridges in the 70S ribosome. The polypeptide is Large ribosomal subunit protein uL14 (Synechococcus sp. (strain WH7803)).